The following is a 605-amino-acid chain: MFKGLFKKTKYISLNPERKTELRSDQNDNKSNKPHIPDGLWEKCDSCKSIIYAEDLKKNYHICHECGHHFRIGAQERINQIIDEDTWVELDQNIISENPLEFEGYSEKVDKLQKKTELKEAILTGLGKINGQQAVIGAMDSRFLMGSMGSVVGEKVTRAIETGIDENLPVIMFTASGGARMQEGIYSLMQMAKTSAAISKLKDKGLPYIVVLTDPTTGGVTASFAMLGDIILAEPNALIGFAGKRVIEQTIKQKLPKEFQRAEFLLKHGFVDKVINRKEMRNKLSHILKLHKTKQPSRMLDGNDCSYYSSKDASKKASAKSVEEIRQQGKKLTPYDKVKLVRSKERPTSLDYIDNIFEGFIEFHGDRYFADDTSIVGGLAFLNGLPVTVIGQQKGRDLQENIYRNFGMPNPEGYRKAVRLMQQAEKFNRPIINFVDTSGAGCGKGAEERGQGEAIAQNLYTMSSLKVPIISLVIGEGGSGGALALTVADEVWMLENSVYSIVSPEGFASILWKDSSKAKEAADVMKITAQDLQELQIIDKILEEPYQDASKDGQAMSEIIKNNLLKTLDNLSKKETNDLLTKRYEKFRSIGRFIEKSNLDSSINQ.

Residues 1-269 (MFKGLFKKTK…QRAEFLLKHG (269 aa)) form an acetyl-coenzyme A carboxylase carboxyl transferase subunit beta region. Positions 40–306 (LWEKCDSCKS…SRMLDGNDCS (267 aa)) constitute a CoA carboxyltransferase N-terminal domain. Residues 40 to 570 (LWEKCDSCKS…KNNLLKTLDN (531 aa)) are carboxyltransferase. Residues Cys-44, Cys-47, Cys-63, and Cys-66 each coordinate Zn(2+). Residues 44–66 (CDSCKSIIYAEDLKKNYHICHEC) form a C4-type zinc finger. The tract at residues 270 to 593 (FVDKVINRKE…YEKFRSIGRF (324 aa)) is acetyl-coenzyme A carboxylase carboxyl transferase subunit alpha. The CoA carboxyltransferase C-terminal domain occupies 317-570 (ASAKSVEEIR…KNNLLKTLDN (254 aa)).

It in the N-terminal section; belongs to the AccD/PCCB family. The protein in the C-terminal section; belongs to the AccA family. As to quaternary structure, acetyl-CoA carboxylase is a heterotetramer composed of biotin carboxyl carrier protein (AccB), biotin carboxylase (AccC) and two subunits of ACCase subunit beta/alpha. It depends on Zn(2+) as a cofactor.

The protein localises to the cytoplasm. It catalyses the reaction N(6)-carboxybiotinyl-L-lysyl-[protein] + acetyl-CoA = N(6)-biotinyl-L-lysyl-[protein] + malonyl-CoA. Its pathway is lipid metabolism; malonyl-CoA biosynthesis; malonyl-CoA from acetyl-CoA: step 1/1. Component of the acetyl coenzyme A carboxylase (ACC) complex. Biotin carboxylase (BC) catalyzes the carboxylation of biotin on its carrier protein (BCCP) and then the CO(2) group is transferred by the transcarboxylase to acetyl-CoA to form malonyl-CoA. The polypeptide is Acetyl-coenzyme A carboxylase carboxyl transferase subunits beta/alpha (accD) (Natranaerobius thermophilus (strain ATCC BAA-1301 / DSM 18059 / JW/NM-WN-LF)).